The primary structure comprises 361 residues: MQYARAAVMVEQNRVETWEVPIFDPAPGGALVRVVLGGVCGSDVHIVSGEAGAMPFPIILGHEGIGRIEKLGTGVTTDYAGVPVKQGDMVYWAPIALCHRCHSCTVLDETPWDNSTFFEHAQKPNWGSYADFACLPNGMAFYRLPDHAQPEALAALGCALPTVLRGYDRCGPVGLDDTVVVQGAGPVGLAAVLVAAASGAKDIIAIDHSPIRLDMARSLGATETISLADTTPEERQRIVQERFGKRGASLVVEAAGALPAFPEGVNLTGNHGRYVILGLWGAIGTQPISPRDLTIKNMSIAGATFPKPKHYYQAMQLAARLQDRYPLADLITQRFSIDEASKALELVKAGALIKPVIDSTL.

Positions 40, 62, 98, 101, 104, and 170 each coordinate Zn(2+).

It belongs to the zinc-containing alcohol dehydrogenase family. Zn(2+) serves as cofactor.

It carries out the reaction (1R,4R,5R)-5-hydroxycamphor + NAD(+) = (1R,4R)-bornane-2,5-dione + NADH + H(+). Its pathway is terpene metabolism; (R)-camphor degradation. The sequence is that of 5-exo-hydroxycamphor dehydrogenase (camD) from Pseudomonas putida (Arthrobacter siderocapsulatus).